Here is a 447-residue protein sequence, read N- to C-terminus: NAD-dependent histone deacetylase HST3 (447 aa).

The tract at residues 1–21 is disordered; the sequence is MTSVSPSPPASRSGSMCSDLP. Residues 35–363 enclose the Deacetylase sirtuin-type domain; the sequence is LDADDEVLRR…IKKLRQLKRE (329 aa). NAD(+) is bound by residues 60–79 and 151–154; these read GAGI…DGLY and QNID. His-187 (proton acceptor) is an active-site residue. The Zn(2+) site is built by Cys-195, Cys-198, Cys-220, and Cys-223. Residues 282–284, 312–314, and Cys-333 contribute to the NAD(+) site; these read GTS and NKT. Residues 365–375 show a composition bias toward basic and acidic residues; sequence SDLRKQMKAQK. 2 disordered regions span residues 365–393 and 411–447; these read SDLR…QGID and KRKI…NQAS.

It belongs to the sirtuin family. Class I subfamily. Requires Zn(2+) as cofactor.

It localises to the cytoplasm. The protein localises to the nucleus. The enzyme catalyses N(6)-acetyl-L-lysyl-[protein] + NAD(+) + H2O = 2''-O-acetyl-ADP-D-ribose + nicotinamide + L-lysyl-[protein]. Its function is as follows. NAD-dependent histone deacetylase, which contributes together with HST4 to histone H3 'Lys-56' deacetylation, regulation of telomeric silencing, proper cell cycle progression, DNA damage control, DNA recombination, and genomic maintenance. The sequence is that of NAD-dependent histone deacetylase HST3 (HST3) from Saccharomyces cerevisiae (strain ATCC 204508 / S288c) (Baker's yeast).